The sequence spans 215 residues: Phosphatidylserine decarboxylase proenzyme (215 aa).

The active-site Schiff-base intermediate with substrate; via pyruvic acid is the serine 184. Serine 184 is subject to Pyruvic acid (Ser); by autocatalysis.

The protein belongs to the phosphatidylserine decarboxylase family. PSD-A subfamily. Heterodimer of a large membrane-associated beta subunit and a small pyruvoyl-containing alpha subunit. Requires pyruvate as cofactor. Is synthesized initially as an inactive proenzyme. Formation of the active enzyme involves a self-maturation process in which the active site pyruvoyl group is generated from an internal serine residue via an autocatalytic post-translational modification. Two non-identical subunits are generated from the proenzyme in this reaction, and the pyruvate is formed at the N-terminus of the alpha chain, which is derived from the carboxyl end of the proenzyme. The post-translation cleavage follows an unusual pathway, termed non-hydrolytic serinolysis, in which the side chain hydroxyl group of the serine supplies its oxygen atom to form the C-terminus of the beta chain, while the remainder of the serine residue undergoes an oxidative deamination to produce ammonia and the pyruvoyl prosthetic group on the alpha chain.

Its subcellular location is the cell membrane. The catalysed reaction is a 1,2-diacyl-sn-glycero-3-phospho-L-serine + H(+) = a 1,2-diacyl-sn-glycero-3-phosphoethanolamine + CO2. The protein operates within phospholipid metabolism; phosphatidylethanolamine biosynthesis; phosphatidylethanolamine from CDP-diacylglycerol: step 2/2. In terms of biological role, catalyzes the formation of phosphatidylethanolamine (PtdEtn) from phosphatidylserine (PtdSer). This is Phosphatidylserine decarboxylase proenzyme from Ralstonia pickettii (strain 12J).